The following is a 761-amino-acid chain: Signal transducer and transcription activator (761 aa).

The 65-residue stretch at 594 to 658 folds into the SH2 domain; sequence WKAGCIMGFI…APWTARDFQV (65 aa). Residue Tyr-711 is modified to Phosphotyrosine; by JAK.

The protein belongs to the transcription factor STAT family. In terms of assembly, forms a homodimer or a heterodimer with a related family member. Tyrosine phosphorylated by hopscotch. Phosphorylation is required for DNA-binding activity and dimerization.

The protein resides in the cytoplasm. Its subcellular location is the nucleus. Functionally, might play a role in signal transduction and activation of transcription. Plays an important role in the segmental pattern formation in the early embryo by activating specific stripes of pair rule gene expression in early development as part of the Janus kinase-STAT pathway. Might play a role in male germline stem cell maintenance. This chain is Signal transducer and transcription activator (Stat92E), found in Drosophila melanogaster (Fruit fly).